Here is a 240-residue protein sequence, read N- to C-terminus: Methylthioribulose-1-phosphate dehydratase (240 aa).

A substrate-binding site is contributed by cysteine 99. Histidine 116 and histidine 118 together coordinate Zn(2+). Catalysis depends on glutamate 145, which acts as the Proton donor/acceptor. Histidine 201 provides a ligand contact to Zn(2+).

It belongs to the aldolase class II family. MtnB subfamily. Zn(2+) is required as a cofactor.

Its subcellular location is the cytoplasm. The enzyme catalyses 5-(methylsulfanyl)-D-ribulose 1-phosphate = 5-methylsulfanyl-2,3-dioxopentyl phosphate + H2O. It functions in the pathway amino-acid biosynthesis; L-methionine biosynthesis via salvage pathway; L-methionine from S-methyl-5-thio-alpha-D-ribose 1-phosphate: step 2/6. Catalyzes the dehydration of methylthioribulose-1-phosphate (MTRu-1-P) into 2,3-diketo-5-methylthiopentyl-1-phosphate (DK-MTP-1-P). The chain is Methylthioribulose-1-phosphate dehydratase from Paracoccidioides brasiliensis (strain Pb18).